The following is a 447-amino-acid chain: Tubulin beta chain (447 aa).

GTP contacts are provided by Q11, E69, S138, G142, T143, G144, N204, and N226. E69 lines the Mg(2+) pocket. Residues 424–447 (QYQDAGVDEEEEEYEEEAPLEGEE) form a disordered region. Over residues 429–447 (GVDEEEEEYEEEAPLEGEE) the composition is skewed to acidic residues.

It belongs to the tubulin family. Dimer of alpha and beta chains. A typical microtubule is a hollow water-filled tube with an outer diameter of 25 nm and an inner diameter of 15 nM. Alpha-beta heterodimers associate head-to-tail to form protofilaments running lengthwise along the microtubule wall with the beta-tubulin subunit facing the microtubule plus end conferring a structural polarity. Microtubules usually have 13 protofilaments but different protofilament numbers can be found in some organisms and specialized cells. Mg(2+) is required as a cofactor.

It localises to the cytoplasm. The protein localises to the cytoskeleton. Functionally, tubulin is the major constituent of microtubules, a cylinder consisting of laterally associated linear protofilaments composed of alpha- and beta-tubulin heterodimers. Microtubules grow by the addition of GTP-tubulin dimers to the microtubule end, where a stabilizing cap forms. Below the cap, tubulin dimers are in GDP-bound state, owing to GTPase activity of alpha-tubulin. The protein is Tubulin beta chain (tub-2) of Neurospora crassa (strain ATCC 24698 / 74-OR23-1A / CBS 708.71 / DSM 1257 / FGSC 987).